The following is a 159-amino-acid chain: Transcription repressor OFP6 (159 aa).

Residues 39–60 (PKRPSSTYRHCHSSISSATPSS) are disordered. A compositionally biased stretch (low complexity) spans 51-60 (SSISSATPSS). An OVATE domain is found at 70 to 129 (VEKDSDDPYLDFRQSMLQMILENQIYSKDELRELLQCFLSLNSHYHHGIIVRAFSEIWED).

In terms of assembly, interacts with KNAT1 and KNAT7. In terms of tissue distribution, expressed in roots, shoots, rosette and cauline leaves, stems, flower buds and siliques.

The protein localises to the nucleus. Functionally, transcriptional repressor that regulates multiple aspects of plant growth and development through the regulation of BEL1-LIKE (BLH) and KNOX TALE (KNAT) homeodomain transcription factors. The chain is Transcription repressor OFP6 (OFP6) from Arabidopsis thaliana (Mouse-ear cress).